A 422-amino-acid chain; its full sequence is E3 ubiquitin-protein ligase CBLL2 (422 aa).

The segment at 54–94 (CDKCDLPIKIYGRIIPCKHAFCYNCANLYDKIGYKICPRCS) adopts an RING-type zinc-finger fold. Residues 93-151 (CSYPVLRIEEHKRGSVFMCSVVQGCKRTYLSQKSLQAHIKRRHKRARKQVASASLEKLR) form an HYB domain region. The segment at 109–135 (FMCSVVQGCKRTYLSQKSLQAHIKRRH) adopts a C2H2-type zinc-finger fold. Disordered regions lie at residues 190–213 (MQQMPHEQHNQPHKDLQVPPPELS) and 378–422 (QTDA…HRPY). The segment covering 195–205 (HEQHNQPHKDL) has biased composition (basic and acidic residues). Over residues 393–405 (LPPPPPTWSPPPS) the composition is skewed to pro residues. A compositionally biased stretch (basic residues) spans 410–422 (GSHHSYQRRHRPY).

Homodimer.

Its subcellular location is the cytoplasm. The enzyme catalyses S-ubiquitinyl-[E2 ubiquitin-conjugating enzyme]-L-cysteine + [acceptor protein]-L-lysine = [E2 ubiquitin-conjugating enzyme]-L-cysteine + N(6)-ubiquitinyl-[acceptor protein]-L-lysine.. Its pathway is protein modification; protein ubiquitination. Functionally, E3 ubiquitin ligase catalyzing the covalent attachment of ubiquitin moieties onto substrate proteins. May operate on tyrosine-phosphorylated SRC substrates. The sequence is that of E3 ubiquitin-protein ligase CBLL2 (CBLL2) from Macaca fascicularis (Crab-eating macaque).